The chain runs to 639 residues: Far upstream element-binding protein 1 (639 aa).

2 disordered regions span residues M1–F27 and K40–M88. A2 bears the N-acetylalanine mark. A compositionally biased stretch (gly residues) spans S14–V23. S48 and S51 each carry phosphoserine. Positions R61 to K73 are enriched in basic and acidic residues. 3 consecutive KH domains span residues V95–L159, N180–V246, and N270–I334. A Phosphoserine modification is found at S135. The residue at position 148 (T148) is a Phosphothreonine. Omega-N-methylarginine occurs at positions 316, 354, 356, and 358. The disordered stretch occupies residues V341 to Q360. Gly residues predominate over residues N345–Q360. Positions L371 to I438 constitute a KH 4 domain. The residue at position 427 (T427) is a Phosphothreonine. Disordered stretches follow at residues I442–P527 and Q543–Q574. The span at P463–Y500 shows a compositional bias: pro residues. Residues P551–N568 are compositionally biased toward low complexity. A Phosphoserine modification is found at S625.

Found in a complex with PUF60 and far upstream element (FUSE) DNA segment. Interacts with PUF60 and JTV1. Ubiquitinated. This targets the protein for proteasome-mediated degradation.

The protein localises to the nucleus. Functionally, regulates MYC expression by binding to a single-stranded far-upstream element (FUSE) upstream of the MYC promoter. May act both as activator and repressor of transcription. The chain is Far upstream element-binding protein 1 from Rattus norvegicus (Rat).